Here is a 349-residue protein sequence, read N- to C-terminus: GTPase Obg (349 aa).

The 159-residue stretch at Met-1–Ile-159 folds into the Obg domain. Residues Ala-160 to Gly-327 enclose the OBG-type G domain. GTP contacts are provided by residues Gly-166–Ser-173, Phe-191–His-195, Asp-212–Gly-215, Asn-279–Asp-282, and Ser-308–Val-310. The Mg(2+) site is built by Ser-173 and Thr-193.

Belongs to the TRAFAC class OBG-HflX-like GTPase superfamily. OBG GTPase family. As to quaternary structure, monomer. Mg(2+) is required as a cofactor.

The protein localises to the cytoplasm. Its function is as follows. An essential GTPase which binds GTP, GDP and possibly (p)ppGpp with moderate affinity, with high nucleotide exchange rates and a fairly low GTP hydrolysis rate. Plays a role in control of the cell cycle, stress response, ribosome biogenesis and in those bacteria that undergo differentiation, in morphogenesis control. This Rhodopseudomonas palustris (strain BisA53) protein is GTPase Obg.